We begin with the raw amino-acid sequence, 444 residues long: MKLFGTDGVRGKAGDFLDAITVLKLAKAAGIYFRKHSTTNKILVGKDTRRSGYMIENALVSGLTAVGYDVIQIGPMPTPAIAYLTESMRCDAGIMISASHNPFEDNGIKFFDNHGNKLNTTCEEEIENIFNDMDLMQSEQVTGRDIGSSKRIDDVIGRYIVAIKSSFPKNLTLKGLRIILDCANGAAYKVGPTILEELGADVITINNKPNGFNINENCGAMHPETVSNLVKEYRADIGLALDGDADRLVVIDEKGEIVDGDNLLGALSVYLKNENLLKGDACVATVMSNKALEDYLQKNKISLFRSNVGDKYVLEVMKEKGINFGGEQSGHIIFSDIAKTGDGLASALQVLALIIKSGKKASEILNPFSLYPQILHNMKVTEKIPLEQITGLEEVLKPIRQKGLRDLIRYSGTENKIRLLLEGKNKKDVEDAMQTLIAFFKKAL.

Catalysis depends on S99, which acts as the Phosphoserine intermediate. Mg(2+) contacts are provided by S99, D242, D244, and D246. S99 is modified (phosphoserine).

It belongs to the phosphohexose mutase family. Mg(2+) serves as cofactor. Post-translationally, activated by phosphorylation.

The catalysed reaction is alpha-D-glucosamine 1-phosphate = D-glucosamine 6-phosphate. Catalyzes the conversion of glucosamine-6-phosphate to glucosamine-1-phosphate. The protein is Phosphoglucosamine mutase of Aliarcobacter butzleri (strain RM4018) (Arcobacter butzleri).